The following is a 141-amino-acid chain: Large ribosomal subunit protein bL21 (141 aa).

Positions 111–141 (ATAPSRTEAAPESNPEAAPSAAATGIPADEE) are disordered. A compositionally biased stretch (low complexity) spans 118 to 133 (EAAPESNPEAAPSAAA).

The protein belongs to the bacterial ribosomal protein bL21 family. In terms of assembly, part of the 50S ribosomal subunit. Contacts protein L20.

In terms of biological role, this protein binds to 23S rRNA in the presence of protein L20. This Synechococcus sp. (strain JA-2-3B'a(2-13)) (Cyanobacteria bacterium Yellowstone B-Prime) protein is Large ribosomal subunit protein bL21.